We begin with the raw amino-acid sequence, 537 residues long: Lysosomal cobalamin transport escort protein LMBD1 (537 aa).

Residues 1-7 are Extracellular-facing; that stretch reads MAAAAAE. The helical transmembrane segment at 8 to 28 threads the bilayer; that stretch reads LVIGWCIFGLLLLAILAFCWV. The Cytoplasmic segment spans residues 29–47; the sequence is YVRKYQSQRESEVVSTVTA. Residues 48–68 form a helical membrane-spanning segment; sequence IFSLAVALITSALLPVDIFLV. Topologically, residues 69 to 97 are extracellular; the sequence is SYMKNQNGTFKDWADANVTVQIENTVLYG. N-linked (GlcNAc...) asparagine glycans are attached at residues asparagine 75 and asparagine 85. Residues 98 to 118 traverse the membrane as a helical segment; sequence YYTLYSVILFCVFFWIPFVYF. At 119-141 the chain is on the cytoplasmic side; the sequence is YYEEKDEDDASKCTQIKTALKYT. A helical membrane pass occupies residues 142–162; that stretch reads LGFVVICALLLLVGAFVPLHL. The Extracellular portion of the chain corresponds to 163-185; it reads PNNNNSTEWEKVKLLFEDLGTGQ. 2 N-linked (GlcNAc...) asparagine glycosylation sites follow: asparagine 166 and asparagine 167. The chain crosses the membrane as a helical span at residues 186 to 206; the sequence is GLAALSFSISSLTLIGMLAAI. At 207 to 302 the chain is on the cytoplasmic side; that stretch reads TYTAYGMSAL…KFCGALRPLK (96 aa). The YERL motif; mediates interaction with adapter protein complex 2 and is essential for its function in clathrin-mediated endocytosis of INSR motif lies at 229-232; the sequence is YERL. Position 235 is a phosphothreonine (threonine 235). Positions 291–294 match the WTKF motif; mediates interaction with adapter protein complex 2 and is essential for its function in clathrin-mediated endocytosis of INSR motif; that stretch reads WTKF. The helical transmembrane segment at 303 to 323 threads the bilayer; it reads IIWGIFFILVALLFVISLFLS. Over 324–361 the chain is Extracellular; sequence NLDKALHSAGIDSGFIIFGTNLSNPLNMLLPLLQTVFP. Asparagine 344 is a glycosylation site (N-linked (GlcNAc...) asparagine). A helical transmembrane segment spans residues 362–382; the sequence is LDYILITIIIMYFIFTSMAGI. Topologically, residues 383-405 are cytoplasmic; the sequence is RNIGIWFFWIRLYKIRRGRTRPQ. Residues 406–426 traverse the membrane as a helical segment; sequence ALLFLCMILLLIVLHTSYMIY. Over 427–483 the chain is Extracellular; it reads SLAPQYVMYGSQNYLIESNITSDAHKGNSTLAVPKRCDADAPKDQCTVTRTYIFLHK. Asparagine 445 and asparagine 454 each carry an N-linked (GlcNAc...) asparagine glycan. The chain crosses the membrane as a helical span at residues 484-504; that stretch reads FWFFSAAYYFGNWAFLVVFLI. Over 505 to 537 the chain is Cytoplasmic; it reads GLIVSCCKGKKSVIEGVDEDSDLSDDEPSAYSA. A phosphoserine mark is found at serine 525 and serine 528.

Belongs to the LIMR family. LMBRD1 subfamily. In terms of assembly, interacts with ABCD4; this interaction induces the translocation of ABCD4 from the endoplasmic reticulum to the lysosome. Interacts with ABCD4 and MMACHC; this interaction ensures the transport of cobalamin from the lysosome to the cytoplasm. Interacts with INSR, adapter protein complex 2 and clathrin heavy chain. Post-translationally, N-glycosylated.

The protein localises to the endoplasmic reticulum membrane. It is found in the lysosome membrane. It localises to the cell membrane. Its subcellular location is the cytoplasmic vesicle. The protein resides in the clathrin-coated vesicle. Lysosomal membrane chaperone required to export cobalamin (vitamin B12) from the lysosome to the cytosol, allowing its conversion to cofactors. Targets ABCD4 transporter from the endoplasmic reticulum to the lysosome. Then forms a complex with lysosomal ABCD4 and cytoplasmic MMACHC to transport cobalamin across the lysosomal membrane. Acts as an adapter protein which plays an important role in mediating and regulating the internalization of the insulin receptor (INSR). Involved in clathrin-mediated endocytosis of INSR via its interaction with adapter protein complex 2. Essential for the initiation of gastrulation and early formation of mesoderm structures during embryogenesis. This chain is Lysosomal cobalamin transport escort protein LMBD1, found in Mus musculus (Mouse).